A 343-amino-acid polypeptide reads, in one-letter code: Ribosomal RNA small subunit methyltransferase C (343 aa).

The protein belongs to the methyltransferase superfamily. RsmC family. In terms of assembly, monomer.

Its subcellular location is the cytoplasm. It catalyses the reaction guanosine(1207) in 16S rRNA + S-adenosyl-L-methionine = N(2)-methylguanosine(1207) in 16S rRNA + S-adenosyl-L-homocysteine + H(+). Functionally, specifically methylates the guanine in position 1207 of 16S rRNA in the 30S particle. This chain is Ribosomal RNA small subunit methyltransferase C, found in Shewanella sediminis (strain HAW-EB3).